A 343-amino-acid chain; its full sequence is 5-amino-6-(D-ribitylamino)uracil--L-tyrosine 4-hydroxyphenyl transferase (343 aa).

The Radical SAM core domain occupies 39 to 268; sequence VTYVVNRNIN…AIARILLYPE (230 aa). The [4Fe-4S] cluster site is built by Cys-53, Cys-57, and Cys-60.

This sequence belongs to the radical SAM superfamily. CofH family. Consists of two subunits, CofG and CofH. It depends on [4Fe-4S] cluster as a cofactor.

It carries out the reaction 5-amino-6-(D-ribitylamino)uracil + L-tyrosine + S-adenosyl-L-methionine = 5-amino-5-(4-hydroxybenzyl)-6-(D-ribitylimino)-5,6-dihydrouracil + 2-iminoacetate + 5'-deoxyadenosine + L-methionine + H(+). The protein operates within cofactor biosynthesis; coenzyme F0 biosynthesis. Functionally, catalyzes the radical-mediated synthesis of 5-amino-5-(4-hydroxybenzyl)-6-(D-ribitylimino)-5,6-dihydrouracil from 5-amino-6-(D-ribitylamino)uracil and L-tyrosine. The protein is 5-amino-6-(D-ribitylamino)uracil--L-tyrosine 4-hydroxyphenyl transferase of Archaeoglobus fulgidus (strain ATCC 49558 / DSM 4304 / JCM 9628 / NBRC 100126 / VC-16).